We begin with the raw amino-acid sequence, 539 residues long: Phosphoenolpyruvate carboxykinase (ATP) (539 aa).

Residues R64, Y206, and K212 each contribute to the substrate site. Residues K212, H231, and 247–255 (GLSGTGKTT) contribute to the ATP site. Residues K212 and H231 each coordinate Mn(2+). Position 268 (D268) interacts with Mn(2+). ATP-binding positions include E296, R332, 448 to 449 (RI), and T454. R332 provides a ligand contact to substrate.

The protein belongs to the phosphoenolpyruvate carboxykinase (ATP) family. As to quaternary structure, monomer. Requires Mn(2+) as cofactor.

Its subcellular location is the cytoplasm. It carries out the reaction oxaloacetate + ATP = phosphoenolpyruvate + ADP + CO2. Its pathway is carbohydrate biosynthesis; gluconeogenesis. Its function is as follows. Involved in the gluconeogenesis. Catalyzes the conversion of oxaloacetate (OAA) to phosphoenolpyruvate (PEP) through direct phosphoryl transfer between the nucleoside triphosphate and OAA. The protein is Phosphoenolpyruvate carboxykinase (ATP) of Sodalis glossinidius (strain morsitans).